Reading from the N-terminus, the 462-residue chain is C4-dicarboxylate transport transcriptional regulatory protein DctD (462 aa).

In terms of domain architecture, Response regulatory spans 12–126; that stretch reads QVLLIDDDPH…ALLDSVRRAL (115 aa). Position 61 is a 4-aspartylphosphate (Asp61). In terms of domain architecture, Sigma-54 factor interaction spans 152–381; the sequence is LIGRSAGMQR…LQNAAERFAL (230 aa). ATP is bound by residues 180 to 187 and 243 to 252; these read GETGAGKE and ANGGTLFLDE.

Post-translationally, phosphorylated by DctB.

In terms of biological role, member of the two-component regulatory system DctB/DctD, which regulates C4-dicarboxylate transport via regulation of expression of the dctPQM operon and dctA. The polypeptide is C4-dicarboxylate transport transcriptional regulatory protein DctD (Pseudomonas aeruginosa (strain ATCC 15692 / DSM 22644 / CIP 104116 / JCM 14847 / LMG 12228 / 1C / PRS 101 / PAO1)).